We begin with the raw amino-acid sequence, 213 residues long: Outer-membrane lipoprotein carrier protein (213 aa).

Positions 1–23 are cleaved as a signal peptide; it reads MKKLLKQSLLGFALVSMTGAAFA.

Belongs to the LolA family. Monomer.

The protein localises to the periplasm. Participates in the translocation of lipoproteins from the inner membrane to the outer membrane. Only forms a complex with a lipoprotein if the residue after the N-terminal Cys is not an aspartate (The Asp acts as a targeting signal to indicate that the lipoprotein should stay in the inner membrane). This is Outer-membrane lipoprotein carrier protein from Actinobacillus pleuropneumoniae serotype 3 (strain JL03).